Reading from the N-terminus, the 691-residue chain is Elongation factor G (691 aa).

The region spanning 10-284 is the tr-type G domain; that stretch reads KRLRNIGIAA…AVVDYLPSPL (275 aa). Residues 19 to 26, 83 to 87, and 137 to 140 each bind GTP; these read AHIDAGKT, DTPGH, and NKMD.

This sequence belongs to the TRAFAC class translation factor GTPase superfamily. Classic translation factor GTPase family. EF-G/EF-2 subfamily.

Its subcellular location is the cytoplasm. Functionally, catalyzes the GTP-dependent ribosomal translocation step during translation elongation. During this step, the ribosome changes from the pre-translocational (PRE) to the post-translocational (POST) state as the newly formed A-site-bound peptidyl-tRNA and P-site-bound deacylated tRNA move to the P and E sites, respectively. Catalyzes the coordinated movement of the two tRNA molecules, the mRNA and conformational changes in the ribosome. The protein is Elongation factor G (fusA) of Thermus thermophilus (strain ATCC 27634 / DSM 579 / HB8).